The chain runs to 122 residues: MHSFNKDIGSLGEDIAKNYLNQIGYTVLERNFRCKVGEIDIIGKDGDYICFIEVKSRYGKLYGNPCESVNYPKRLKIYKAANIYMLRKKLFKFNFRFDVIEIIFNTYNDVPSIKLIKDAFQI.

Belongs to the UPF0102 family.

The chain is UPF0102 protein CKL_1410 from Clostridium kluyveri (strain ATCC 8527 / DSM 555 / NBRC 12016 / NCIMB 10680 / K1).